Consider the following 497-residue polypeptide: Guanosine-5'-triphosphate,3'-diphosphate pyrophosphatase (497 aa).

Belongs to the GppA/Ppx family. GppA subfamily.

The enzyme catalyses guanosine 3'-diphosphate 5'-triphosphate + H2O = guanosine 3',5'-bis(diphosphate) + phosphate + H(+). The protein operates within purine metabolism; ppGpp biosynthesis; ppGpp from GTP: step 2/2. Its function is as follows. Catalyzes the conversion of pppGpp to ppGpp. Guanosine pentaphosphate (pppGpp) is a cytoplasmic signaling molecule which together with ppGpp controls the 'stringent response', an adaptive process that allows bacteria to respond to amino acid starvation, resulting in the coordinated regulation of numerous cellular activities. In Vibrio parahaemolyticus serotype O3:K6 (strain RIMD 2210633), this protein is Guanosine-5'-triphosphate,3'-diphosphate pyrophosphatase.